The primary structure comprises 536 residues: Alpha-1,3-mannosyl-glycoprotein 4-beta-N-acetylglucosaminyltransferase A (536 aa).

Topologically, residues 1–6 (MRLRNG) are cytoplasmic. The helical; Signal-anchor for type II membrane protein transmembrane segment at 7–27 (TVATALVFITTFLSLSWYTAW) threads the bilayer. A coiled-coil region spans residues 28 to 54 (QNGKEKLMAYQREFHALKERLRIAEHR). Residues 28-536 (QNGKEKLMAY…EIHIKRNPAD (509 aa)) are Lumenal-facing. 2 N-linked (GlcNAc...) asparagine glycosylation sites follow: Asn-77 and Asn-458.

The protein belongs to the glycosyltransferase 54 family. It depends on a divalent metal cation as a cofactor. Post-translationally, N-glycosylated.

It is found in the golgi apparatus membrane. It localises to the secreted. The enzyme catalyses N(4)-{beta-D-GlcNAc-(1-&gt;2)-alpha-D-Man-(1-&gt;3)-[beta-D-GlcNAc-(1-&gt;2)-alpha-D-Man-(1-&gt;6)]-beta-D-Man-(1-&gt;4)-beta-D-GlcNAc-(1-&gt;4)-beta-D-GlcNAc}-L-asparaginyl-[protein] + UDP-N-acetyl-alpha-D-glucosamine = N(4)-{beta-D-GlcNAc-(1-&gt;2)-[beta-D-GlcNAc-(1-&gt;4)]-alpha-D-Man-(1-&gt;3)-[beta-D-GlcNAc-(1-&gt;2)-alpha-D-Man-(1-&gt;6)]-beta-D-Man-(1-&gt;4)-beta-D-GlcNAc-(1-&gt;4)-beta-D-GlcNAc}-L-asparaginyl-[protein] + UDP + H(+). It catalyses the reaction an N(4)-{beta-D-GlcNAc-(1-&gt;2)-alpha-D-Man-(1-&gt;3)-[alpha-D-Man-(1-&gt;6)]-beta-D-Man-(1-&gt;4)-beta-D-GlcNAc-(1-&gt;4)-beta-D-GlcNAc}-L-asparaginyl-[protein] + UDP-N-acetyl-alpha-D-glucosamine = an N(4)-{beta-D-GlcNAc-(1-&gt;2)-[beta-D-GlcNAc-(1-&gt;4)]-alpha-D-Man-(1-&gt;3)-[alpha-D-Man-(1-&gt;6)]-beta-D-Man-(1-&gt;4)-beta-D-GlcNAc-(1-&gt;4)-beta-D-GlcNAc}-L-asparaginyl-[protein] + UDP + H(+). The catalysed reaction is an N(4)-{beta-D-GlcNAc-(1-&gt;2)-alpha-D-Man-(1-&gt;3)-[beta-D-GlcNAc-(1-&gt;2)-[beta-D-GlcNAc-(1-&gt;6)]-alpha-D-Man-(1-&gt;6)]-beta-D-Man-(1-&gt;4)-beta-D-GlcNAc-(1-&gt;4)-beta-D-GlcNAc}-L-asparaginyl-[protein] + UDP-N-acetyl-alpha-D-glucosamine = an N(4)-{beta-D-GlcNAc-(1-&gt;2)-[beta-D-GlcNAc-(1-&gt;4)]-alpha-D-Man-(1-&gt;3)-[beta-D-GlcNAc-(1-&gt;2)-[beta-D-GlcNAc-(1-&gt;6)]-alpha-D-Man-(1-&gt;6)]-beta-D-Man-(1-&gt;4)-beta-D-GlcNAc-(1-&gt;4)-beta-D-GlcNAc}-L-asparaginyl-[protein] + UDP + H(+). It carries out the reaction an N(4)-{beta-D-GlcNAc-(1-&gt;2)-alpha-D-Man-(1-&gt;3)-[beta-D-GlcNAc-(1-&gt;2)-alpha-D-Man-(1-&gt;6)]-beta-D-Man-(1-&gt;4)-beta-D-GlcNAc-(1-&gt;4)-[alpha-L-Fuc-(1-&gt;6)]-beta-D-GlcNAc}-L-asparaginyl-[protein] + UDP-N-acetyl-alpha-D-glucosamine = N(4)-{beta-D-GlcNAc-(1-&gt;2)-[beta-D-GlcNAc-(1-&gt;4)]-alpha-D-Man-(1-&gt;3)-[beta-D-GlcNAc-(1-&gt;2)-alpha-D-Man-(1-&gt;6)]-beta-D-Man-(1-&gt;4)-beta-D-GlcNAc-(1-&gt;4)-[alpha-L-Fuc-(1-&gt;6)]-beta-D-GlcNAc}-asparaginyl-[protein] + UDP + H(+). The enzyme catalyses an N(4)-{beta-D-GlcNAc-(1-&gt;2)-alpha-D-Man-(1-&gt;3)-[beta-D-Gal-(1-&gt;4)-beta-D-GlcNAc-(1-&gt;2)-alpha-D-Man-(1-&gt;6)]-beta-D-Man-(1-&gt;4)-beta-D-GlcNAc-(1-&gt;4)-beta-D-GlcNAc}-L-asparaginyl-[protein] + UDP-N-acetyl-alpha-D-glucosamine = an N(4)-{beta-D-GlcNAc-(1-&gt;2)-[beta-D-GlcNAc-(1-&gt;4)]-alpha-D-Man-(1-&gt;3)-[beta-D-Gal-(1-&gt;4)-beta-D-GlcNAc-(1-&gt;2)-alpha-D-Man-(1-&gt;6)]-beta-D-Man-(1-&gt;4)-beta-D-GlcNAc-(1-&gt;4)-beta-D-GlcNAc}-L-asparaginyl-[protein] + UDP + H(+). It catalyses the reaction N(4)-{beta-D-GlcNAc-(1-&gt;2)-alpha-D-Man-(1-&gt;3)-[alpha-D-Man-(1-&gt;3)-{alpha-D-Man-(1-&gt;6)}-alpha-D-Man-(1-&gt;6)]-beta-D-Man-(1-&gt;4)-beta-D-GlcNAc-(1-&gt;4)-beta-D-GlcNAc}-asparaginyl-[protein] + UDP-N-acetyl-alpha-D-glucosamine = N(4)-{beta-D-GlcNAc-(1-&gt;2)-[beta-D-GlcNAc-(1-&gt;4)]-alpha-D-Man-(1-&gt;3)-[alpha-D-Man-(1-&gt;3)-{alpha-D-Man-(1-&gt;6)}-alpha-D-Man-(1-&gt;6)]-beta-D-Man-(1-&gt;4)-beta-D-GlcNAc-(1-&gt;4)-beta-D-GlcNAc}-asparaginyl-[protein] + UDP + H(+). The catalysed reaction is N(4)-{beta-D-GlcNAc-(1-&gt;2)-alpha-D-Man-(1-&gt;3)-beta-D-Man-(1-&gt;4)-beta-D-GlcNAc-(1-&gt;4)-beta-D-GlcNAc}-asparaginyl-[protein] + UDP-N-acetyl-alpha-D-glucosamine = N(4)-{beta-D-GlcNAc-(1-&gt;2)-[beta-D-GlcNAc-(1-&gt;4)]-alpha-D-Man-(1-&gt;3)-beta-D-Man-(1-&gt;4)-beta-D-GlcNAc-(1-&gt;4)-beta-D-GlcNAc}-asparaginyl-[protein] + UDP + H(+). It functions in the pathway protein modification; protein glycosylation. With respect to regulation, inhibited by UDP. In terms of biological role, glycosyltransferase that catalyze the transfer of GlcNAc from UDP-GlcNAc to the GlcNAcbeta1-2Manalpha1-3 arm of the core structure of N-linked glycans through a beta1-4 linkage and participates in the production of tri- and tetra-antennary N-linked sugar chains. Involved in glucose transport by mediating SLC2A2/GLUT2 glycosylation, thereby controlling cell-surface expression of SLC2A2 in pancreatic beta cells. In Xenopus tropicalis (Western clawed frog), this protein is Alpha-1,3-mannosyl-glycoprotein 4-beta-N-acetylglucosaminyltransferase A.